The chain runs to 274 residues: Cyclase-like protein 1 (274 aa).

A signal peptide spans 1 to 18; the sequence is MAASRLALLLLVLAVAAA.

Belongs to the Cyclase 1 superfamily. Highly expressed in leaf sheaths. Expressed in leaf collars.

Its subcellular location is the secreted. The protein localises to the extracellular space. It is found in the extracellular matrix. In terms of biological role, may be involved in response to stresses. This chain is Cyclase-like protein 1, found in Oryza sativa subsp. japonica (Rice).